The following is a 393-amino-acid chain: Protein TsgA (393 aa).

The next 12 helical transmembrane spans lie at 11 to 31 (WISF…GMVM), 51 to 71 (FLNA…EIVP), 78 to 98 (FGFL…SLAL), 101 to 121 (AAMF…TFLV), 134 to 154 (LLFT…IAAF), 162 to 182 (WYWV…LTFG), 206 to 226 (IGVL…LGFI), 245 to 265 (TLVS…SFIL), 273 to 293 (ILTV…TGTP), 297 to 317 (AWSI…IITL), 332 to 352 (FVLT…GPIV), and 361 to 381 (LLTA…LGFV).

Belongs to the major facilitator superfamily. TsgA family.

The protein resides in the cell inner membrane. The sequence is that of Protein TsgA from Escherichia coli O139:H28 (strain E24377A / ETEC).